Here is a 262-residue protein sequence, read N- to C-terminus: Mitochondrial calcium uniporter regulator 1 (262 aa).

Residues 138-175 (EKSEFSALRTQNEKVKIELQQLKKQLNDSIVKVRASNK) are a coiled coil. A helical transmembrane segment spans residues 239 to 261 (TIKYLAGSVFTCLTIALGFYRLW).

It belongs to the CCDC90 family.

It is found in the mitochondrion inner membrane. Key regulator of mitochondrial calcium uniporter (mcu) required for calcium entry into mitochondrion. The sequence is that of Mitochondrial calcium uniporter regulator 1 from Xenopus tropicalis (Western clawed frog).